The sequence spans 469 residues: MYEAVIGLEVHLHLKTRTKMFCGCRADYFGAEPNTHTCPVCLGLPGALPVPNRVAVEHGLRLALALGAEVPERLVFHRKNYFYPDLPKNYQISQYDLPLGRGGSLPLGERRVRIKRLHLEEDAGKSLHLEGRTLLDLNRAGSPLIELVTEPDLKTPEEARLFLQRIQALVQTLGISDASPEEGKLRADVNVSVRRVGEPLGTKVEIKNLNSFKSVQRALEYEIRRQTEILRRGEKVKQATMGFEEGSGKTYPMRTKEEEADYRYFPEPDLPPVVIPRDWLEEVRRSLPELPWEKEARYRALGIKEKDAEVLAYTPSLARFLDQALPLGLASPQALANWLLADVAGLLHERGLRLEETRLSPEGLARLVGLFERGEVTSRVAKSLLPEVLEGQDPEALVRERGLKVVADEGALKALVAEAIAAMPEAAESVRQGKVKALDALVGQVMRKTRGQARPDLVRRLLLEALGVG.

Belongs to the GatB/GatE family. GatB subfamily. Heterotrimer of A, B and C subunits.

It catalyses the reaction L-glutamyl-tRNA(Gln) + L-glutamine + ATP + H2O = L-glutaminyl-tRNA(Gln) + L-glutamate + ADP + phosphate + H(+). It carries out the reaction L-aspartyl-tRNA(Asn) + L-glutamine + ATP + H2O = L-asparaginyl-tRNA(Asn) + L-glutamate + ADP + phosphate + 2 H(+). Functionally, allows the formation of correctly charged Asn-tRNA(Asn) or Gln-tRNA(Gln) through the transamidation of misacylated Asp-tRNA(Asn) or Glu-tRNA(Gln) in organisms which lack either or both of asparaginyl-tRNA or glutaminyl-tRNA synthetases. The reaction takes place in the presence of glutamine and ATP through an activated phospho-Asp-tRNA(Asn) or phospho-Glu-tRNA(Gln). The sequence is that of Aspartyl/glutamyl-tRNA(Asn/Gln) amidotransferase subunit B from Thermus thermophilus (strain ATCC BAA-163 / DSM 7039 / HB27).